A 186-amino-acid chain; its full sequence is Chromosome-anchoring protein RacA (186 aa).

Positions 3-23 (TADAANELGVSTKTVQRWVKQ) form a DNA-binding region, H-T-H motif. Positions 90–170 (ERLEERLQRF…NRREKDTAVR (81 aa)) form a coiled coil. The disordered stretch occupies residues 158–186 (ESMNRREKDTAVRREEKKPKSKLKSIFSF). A compositionally biased stretch (basic and acidic residues) spans 160-175 (MNRREKDTAVRREEKK).

This sequence belongs to the RacA family.

The protein localises to the cytoplasm. Functionally, required for the formation of axial filaments and for anchoring the origin regions at the cell poles in sporulating cells, thus ensuring proper chromosome segregation in the prespore. Binds in a dispersed manner throughout the chromosome but preferentially to sites clustered in the origin portion of the chromosome, causing condensation of the chromosome and its remodeling into an elongated, anchored structure. The chain is Chromosome-anchoring protein RacA from Bacillus licheniformis (strain ATCC 14580 / DSM 13 / JCM 2505 / CCUG 7422 / NBRC 12200 / NCIMB 9375 / NCTC 10341 / NRRL NRS-1264 / Gibson 46).